Consider the following 286-residue polypeptide: Putative L-ribulose-5-phosphate 3-epimerase SgbU (286 aa).

The protein belongs to the L-ribulose-5-phosphate 3-epimerase family.

The catalysed reaction is L-ribulose 5-phosphate = L-xylulose 5-phosphate. Functionally, catalyzes the isomerization of L-xylulose-5-phosphate to L-ribulose-5-phosphate. This is Putative L-ribulose-5-phosphate 3-epimerase SgbU (sgbU) from Haemophilus influenzae (strain ATCC 51907 / DSM 11121 / KW20 / Rd).